The primary structure comprises 169 residues: Allophycocyanin subunit beta-18 (169 aa).

Asn72 carries the post-translational modification N4-methylasparagine. Position 82 (Cys82) interacts with (2R,3E)-phycocyanobilin.

This sequence belongs to the phycobiliprotein family. As to quaternary structure, heterodimer of ApcE and this beta chain. Contains one covalently linked bilin chromophore. The chromophore is added by phycocyanobilin lyase CpcUS.

Its subcellular location is the cellular thylakoid membrane. A variant beta-allophycocyanin (AP) which forms a complex with ApcE, a phycobilisome terminal emitter that influences energy transfer to photosystem II. This chain is Allophycocyanin subunit beta-18 (apcF), found in Picosynechococcus sp. (strain ATCC 27264 / PCC 7002 / PR-6) (Agmenellum quadruplicatum).